Reading from the N-terminus, the 204-residue chain is CASP-like protein 2A1 (204 aa).

Positions 1–11 (MEKSNDHDKAS) are enriched in basic and acidic residues. The segment at 1-25 (MEKSNDHDKASHGGSGGGATEKWEE) is disordered. At 1 to 32 (MEKSNDHDKASHGGSGGGATEKWEETSPGIRT) the chain is on the cytoplasmic side. Residues 33–53 (AETMLRLAPVGLCVAALVVML) form a helical membrane-spanning segment. Over 54–74 (KDSETNEFGSISYSNLTAFRY) the chain is Extracellular. The N-linked (GlcNAc...) asparagine glycan is linked to N68. The chain crosses the membrane as a helical span at residues 75–95 (LVHANGICAGYSLLSAAIAAM). Over 96 to 113 (PRSSSTMPRVWTFFCLDQ) the chain is Cytoplasmic. A helical transmembrane segment spans residues 114 to 134 (LLTYLVLAAGAVSAEVLYLAY). Topologically, residues 135–155 (NGDSAITWSDACSSYGGFCHR) are extracellular. Residues 156–176 (ATASVIITFFVVCFYILLSLI) form a helical membrane-spanning segment. The Cytoplasmic portion of the chain corresponds to 177 to 204 (SSYKLFTRFDPPSIVDSDKTLEVAVFGS).

It belongs to the Casparian strip membrane proteins (CASP) family. In terms of assembly, homodimer and heterodimers.

It localises to the cell membrane. In Arabidopsis lyrata subsp. lyrata (Lyre-leaved rock-cress), this protein is CASP-like protein 2A1.